We begin with the raw amino-acid sequence, 477 residues long: Oleate hydroxylase FAH12 (477 aa).

Positions 26–48 are disordered; that stretch reads YESSAAVSPAESPRTSASSTSLS. Over residues 27–48 the composition is skewed to low complexity; that stretch reads ESSAAVSPAESPRTSASSTSLS. The next 2 helical transmembrane spans lie at 101 to 118 and 133 to 153; these read AYVL…YLFH and FVLW…LWVI. A Histidine box-1 motif is present at residues 155 to 159; that stretch reads HECGH. Residues 167-187 traverse the membrane as a helical segment; it reads FISDLTGWVIHSALLVPYFSW. The Histidine box-2 signature appears at 191–195; the sequence is HSAHH. Transmembrane regions (helical) follow at residues 234-254, 299-319, and 327-347; these read PIYT…SYLM, YIVL…YLGN, and AVWY…ITFL.

The protein belongs to the fatty acid desaturase type 1 family.

Its subcellular location is the microsome membrane. It catalyses the reaction (9Z)-octadecenoate + AH2 + O2 = (12R)-hydroxy-(9Z)-octadecenoate + A + H2O. It functions in the pathway lipid metabolism; monounsaturated fatty acid biosynthesis. Its function is as follows. Oleate hydroxylase involved in the biosynthesis of ricinoleate (12-hydroxy-cis-9-octadecenoate), that is present at high levels in C.purpurea sclerotium tissue. Exhibits delta(12) hydroxylase activity on 16C and 18C monounsaturated fatty acids (i.e. oleic and palmitoleic acids), and, to a lower extent, gamma(3) hydroxylase activity on ricinoleate. The sequence is that of Oleate hydroxylase FAH12 from Claviceps purpurea (Ergot fungus).